Consider the following 1364-residue polypeptide: Serine protease SepA autotransporter (1364 aa).

A signal peptide spans 1 to 56; the sequence is MNKIYYLKYCHITKSLIAVSELARRVTCKSHRRLSRRVILTSVAALSLSSAWPALS. Positions 57–307 constitute a Peptidase S6 domain; that stretch reads ATVSAEIPYQ…VVTTQDFLGQ (251 aa). Active-site charge relay system residues include His134, Asp162, and Ser267. The Autotransporter domain maps to 1098–1364; it reads DTQGDAGVWA…AINANFRYVF (267 aa).

Post-translationally, cleaved to release the mature protein from the outer membrane. Cleavage is performed by an unknown protease.

It is found in the periplasm. Its subcellular location is the secreted. The protein localises to the cell surface. It localises to the cell outer membrane. Inhibited by the serine protease inhibitor PMSF, but not by benzamidine, alpha 1-antitrypsin, alpha 1-antichymotrypsin. Not inhibited by metalloprotease inhibitors such as EDTA and orthophenanthroline. In terms of biological role, major protein secreted in laboratory media showing proteolytic activity. May be involved in invasion and destruction of host intestinal epithelium. This chain is Serine protease SepA autotransporter (sepA), found in Shigella flexneri.